We begin with the raw amino-acid sequence, 306 residues long: Lipid A biosynthesis palmitoleoyltransferase (306 aa).

A helical transmembrane segment spans residues 20–40 (WFGLGVLWLWVQLPYPVLCFL). An HXXXXD motif motif is present at residues 132 to 137 (HFMSLE).

The protein belongs to the LpxL/LpxM/LpxP family. LpxP subfamily.

The protein localises to the cell inner membrane. It catalyses the reaction (9Z)-hexadecenoyl-[ACP] + alpha-Kdo-(2-&gt;4)-alpha-Kdo-(2-&gt;6)-lipid IVA (E. coli) = (9Z)-hexadecenoyl-(Kdo)2-lipid IVA (E. coli) + holo-[ACP]. It participates in bacterial outer membrane biogenesis; lipopolysaccharide biosynthesis. Catalyzes the transfer of palmitoleate from palmitoleoyl-[acyl-carrier-protein] (ACP) to Kdo(2)-lipid IV(A) to form Kdo(2)-(palmitoleoyl)-lipid IV(A). Required for the biosynthesis of a distinct molecular species of lipid A, which is present only in cells grown at low temperatures. It may confer a selective advantage to cells growing at lower temperatures by making the outer membrane a more effective barrier to harmful chemicals. The chain is Lipid A biosynthesis palmitoleoyltransferase from Escherichia coli (strain K12).